A 688-amino-acid chain; its full sequence is Elongation factor G (688 aa).

A tr-type G domain is found at 6-280 (KLFRNFGIMA…AVVDFLPSPI (275 aa)). Residues 15–22 (AHIDAGKT), 79–83 (DTPGH), and 133–136 (NKMD) each bind GTP.

It belongs to the TRAFAC class translation factor GTPase superfamily. Classic translation factor GTPase family. EF-G/EF-2 subfamily.

Its subcellular location is the cytoplasm. Catalyzes the GTP-dependent ribosomal translocation step during translation elongation. During this step, the ribosome changes from the pre-translocational (PRE) to the post-translocational (POST) state as the newly formed A-site-bound peptidyl-tRNA and P-site-bound deacylated tRNA move to the P and E sites, respectively. Catalyzes the coordinated movement of the two tRNA molecules, the mRNA and conformational changes in the ribosome. The sequence is that of Elongation factor G from Ureaplasma parvum serovar 3 (strain ATCC 27815 / 27 / NCTC 11736).